The primary structure comprises 251 residues: HTH-type transcriptional regulator UlaR (251 aa).

One can recognise an HTH deoR-type domain in the interval glutamate 3–alanine 58. The segment at residues valine 20 to aspartate 39 is a DNA-binding region (H-T-H motif).

It is found in the cytoplasm. Its function is as follows. Represses ulaG and the ulaABCDEF operon. The chain is HTH-type transcriptional regulator UlaR from Shigella flexneri.